The following is a 371-amino-acid chain: GTPase Obg (371 aa).

The Obg domain maps to 1–159; it reads MKFVDEAYID…KNLKLELKVL (159 aa). Positions 160–334 constitute an OBG-type G domain; sequence ADVGLLGMPN…LIRTIYKHVH (175 aa). Residues 166–173, 191–195, 213–216, 284–287, and 315–317 each bind GTP; these read GMPNAGKS, FTTLH, DIPG, NKLD, and SAL. Residues Ser-173 and Thr-193 each contribute to the Mg(2+) site.

The protein belongs to the TRAFAC class OBG-HflX-like GTPase superfamily. OBG GTPase family. As to quaternary structure, monomer. Mg(2+) serves as cofactor.

Its subcellular location is the cytoplasm. In terms of biological role, an essential GTPase which binds GTP, GDP and possibly (p)ppGpp with moderate affinity, with high nucleotide exchange rates and a fairly low GTP hydrolysis rate. Plays a role in control of the cell cycle, stress response, ribosome biogenesis and in those bacteria that undergo differentiation, in morphogenesis control. The sequence is that of GTPase Obg from Delftia acidovorans (strain DSM 14801 / SPH-1).